A 57-amino-acid chain; its full sequence is UPF0509 protein YciZ (57 aa).

Belongs to the UPF0509 family.

The polypeptide is UPF0509 protein YciZ (yciZ) (Shigella flexneri).